A 464-amino-acid polypeptide reads, in one-letter code: Arylsulfatase (464 aa).

A signal peptide spans 1-20 (MNKKAMAAAVSMILAGGAHA). Ca(2+) is bound by residues aspartate 34, aspartate 35, and serine 72. Catalysis depends on serine 72, which acts as the Nucleophile. Serine 72 carries the 3-oxoalanine (Ser) modification. Histidine 134 is an active-site residue. The Ca(2+) site is built by aspartate 329 and asparagine 330.

Belongs to the sulfatase family. It depends on Ca(2+) as a cofactor. Post-translationally, the conversion to 3-oxoalanine (also known as C-formylglycine, FGly), of a serine or cysteine residue in prokaryotes and of a cysteine residue in eukaryotes, is critical for catalytic activity.

The protein resides in the periplasm. It catalyses the reaction an aryl sulfate + H2O = a phenol + sulfate + H(+). Plays an important role in the mineralization of sulfates. The protein is Arylsulfatase (atsA) of Klebsiella aerogenes (Enterobacter aerogenes).